The chain runs to 178 residues: MQNKQNLIWIDLEMTGLDPDTDVIIEMATIITDSELNTLAEGPVIAVHQSDETLAKMDEWNTRQHGGSGLTQRVRESTVSMAEAEAQTLEFIKLWVPERSSPICGNSICQDRRFLYRHMPTLENWFHYRNLDVSTLKELAARWSPELKFKKGSTHLALDDIRESIAELRFYREHFIKP.

The Exonuclease domain maps to 7 to 168 (LIWIDLEMTG…DDIRESIAEL (162 aa)). Y128 is an active-site residue.

This sequence belongs to the oligoribonuclease family.

It is found in the cytoplasm. In terms of biological role, 3'-to-5' exoribonuclease specific for small oligoribonucleotides. This chain is Oligoribonuclease, found in Pseudomonas syringae pv. syringae (strain B728a).